The sequence spans 129 residues: Arsenate-mycothiol transferase ArsC2 (129 aa).

Belongs to the low molecular weight phosphotyrosine protein phosphatase family.

The protein localises to the cytoplasm. The catalysed reaction is mycothiol + arsenate = arseno-mycothiol + H2O. Involved in defense against toxic arsenate. Involved in the mycothiol/myoredoxin redox pathway which uses a mycothioltransferase mechanism; facilitates adduct formation between arsenate and mycothiol. The protein is Arsenate-mycothiol transferase ArsC2 (arsC2) of Corynebacterium glutamicum (strain ATCC 13032 / K051).